The chain runs to 362 residues: tRNA N6-adenosine threonylcarbamoyltransferase (362 aa).

Residues histidine 116 and histidine 120 each contribute to the Fe cation site. Substrate is bound by residues 138 to 142 (LVSGG), aspartate 171, glycine 184, and asparagine 284. Aspartate 312 serves as a coordination point for Fe cation.

This sequence belongs to the KAE1 / TsaD family. It depends on Fe(2+) as a cofactor.

Its subcellular location is the cytoplasm. It catalyses the reaction L-threonylcarbamoyladenylate + adenosine(37) in tRNA = N(6)-L-threonylcarbamoyladenosine(37) in tRNA + AMP + H(+). Required for the formation of a threonylcarbamoyl group on adenosine at position 37 (t(6)A37) in tRNAs that read codons beginning with adenine. Is involved in the transfer of the threonylcarbamoyl moiety of threonylcarbamoyl-AMP (TC-AMP) to the N6 group of A37, together with TsaE and TsaB. TsaD likely plays a direct catalytic role in this reaction. This Chelativorans sp. (strain BNC1) protein is tRNA N6-adenosine threonylcarbamoyltransferase.